The following is a 1074-amino-acid chain: Transmembrane protein 132E (1074 aa).

The first 25 residues, 1–25 (MAPGMSGRGGAALLCLSALLAHASG), serve as a signal peptide directing secretion. Residues 26–893 (RSHPASPSPP…LTDLEIGMYA (868 aa)) lie on the Extracellular side of the membrane. Asparagine 70 and asparagine 91 each carry an N-linked (GlcNAc...) asparagine glycan. Disordered stretches follow at residues 202–226 (PPAP…ATGE) and 241–264 (ASGG…ESPT). Gly residues predominate over residues 243–256 (GGCGGSRRGAGPGV). Residues asparagine 318 and asparagine 399 are each glycosylated (N-linked (GlcNAc...) asparagine). Disordered stretches follow at residues 563–585 (RSVR…ASRG) and 814–867 (GRDE…VPPT). Over residues 841–862 (GAGPPGSALPAPEAPGPGTASP) the composition is skewed to low complexity. Residues 894–914 (LLGVFCLAILVFLINCIVFVL) form a helical membrane-spanning segment. Over 915–1074 (RYRHKRIPPE…NYMRRIKEIA (160 aa)) the chain is Cytoplasmic. Positions 946–1063 (VQGELSPPAG…PTRPTAPPDL (118 aa)) are disordered. Residues 972-984 (SGSSQTSVQSQVH) show a composition bias toward low complexity. The span at 1034 to 1044 (GEEDEEEEEDL) shows a compositional bias: acidic residues.

Belongs to the TMEM132 family.

The protein resides in the membrane. Required for normal inner ear hair cell function and hearing. The protein is Transmembrane protein 132E of Homo sapiens (Human).